Consider the following 1170-residue polypeptide: Glucose transport transcription regulator RGT1 (1170 aa).

A compositionally biased stretch (polar residues) spans 1–22 (MNELNTVSTNSSDSTKNGGTSN). Residues 1-46 (MNELNTVSTNSSDSTKNGGTSNSPDDMDSAAAASHAIKKRTKASRA) are disordered. Residues 47 to 76 (CDQCRKKKIKCDYKDEKGVCSNCQRNGDRC) constitute a DNA-binding region (zn(2)-C6 fungal-type). The disordered stretch occupies residues 77 to 148 (SFDRVPLKRG…VPSTPSRSNS (72 aa)). A compositionally biased stretch (basic and acidic residues) spans 99-108 (RTNEIQDHNN). Low complexity predominate over residues 113 to 138 (NTFDNSNNTLNNNTGNSGDNGINSNT). Over residues 139 to 148 (VPSTPSRSNS) the composition is skewed to polar residues. A phosphoserine mark is found at S202, S205, S208, and S229. Positions 217 to 234 (PNEQLSYNTVQQSPITNK) are enriched in polar residues. Disordered regions lie at residues 217–254 (PNEQLSYNTVQQSPITNKHTNDSGNANGSVTGSGSASG), 269–288 (APTDDHNGEQTRRSSSIPSL), 293–343 (SNSL…PSIS), 384–506 (AQQT…HPMT), 725–757 (DEEANTGNGNTKTSEFEIGSESAGHMNPSNSPN), and 946–974 (RPPNPPANNPTVQEGPSAMGSSPVAGNLN). Residues 239 to 250 (SGNANGSVTGSG) are compositionally biased toward low complexity. The segment covering 271–280 (TDDHNGEQTR) has biased composition (basic and acidic residues). Residues S283 and S284 each carry the phosphoserine modification. Low complexity-rich tracts occupy residues 293–302 (SNSLLLGGQP), 309–341 (QQSQPQAHQQKLQQGQNPYSYSQFSQQQPYNPS), and 385–397 (QQTQRPQGQQVPQ). Residues S410 and S414 each carry the phosphoserine modification. A compositionally biased stretch (polar residues) spans 411–422 (APVSVTLSTDRL). Residues 424–444 (GNENNNGEINNNNGSNNSGSS) are compositionally biased toward low complexity. Over residues 445–457 (KDTSQHSQESVTT) the composition is skewed to polar residues. Positions 473–488 (STKKRRKSYVSKKTKP) are enriched in basic residues. Residues 493–506 (SISITSKDSAHPMT) show a composition bias toward polar residues. Residue S1130 is modified to Phosphoserine.

This sequence belongs to the EDS1/RGT1 family. Post-translationally, glucose-induced phosphorylation regulates the DNA-binding activity. Hyperphosphorylation in cells growing on high levels of glucose does prevents DNA-binding and dephosphorylation restores DNA-binding ability.

It is found in the nucleus. The protein localises to the cytoplasm. Its function is as follows. Glucose-responsive transcription factor that regulates expression of several glucose transporter (HXT) genes in response to glucose. In the absence of glucose, it functions as a transcriptional repressor, whereas high concentrations of glucose cause it to function as a transcriptional activator. In cells growing on low levels of glucose, has a neutral role, neither repressing nor activating transcription. Binds the consensus binding site sequence 5'-CGGANNA-3', of which multiple copies are present in all HXT promoters regulated by RGT1. In Saccharomyces cerevisiae (strain YJM789) (Baker's yeast), this protein is Glucose transport transcription regulator RGT1 (RGT1).